Reading from the N-terminus, the 106-residue chain is Large ribosomal subunit protein bL21 (106 aa).

It belongs to the bacterial ribosomal protein bL21 family. In terms of assembly, part of the 50S ribosomal subunit. Contacts protein L20.

Functionally, this protein binds to 23S rRNA in the presence of protein L20. This is Large ribosomal subunit protein bL21 from Coprothermobacter proteolyticus (strain ATCC 35245 / DSM 5265 / OCM 4 / BT).